A 552-amino-acid polypeptide reads, in one-letter code: Membrane protein insertase YidC (552 aa).

Residues 3–23 traverse the membrane as a helical segment; the sequence is IKRTVLWVIFFMSAVMLFDNW. The interval 35 to 59 is disordered; that stretch reads PSATPTKTVGSAAPGTTTPGTQPAD. The span at 42–59 shows a compositional bias: low complexity; the sequence is TVGSAAPGTTTPGTQPAD. The next 3 membrane-spanning stretches (helical) occupy residues 364-384, 430-450, and 504-524; these read WGWS…PLSA, FGGC…YWVL, and MMFM…GLVL.

It belongs to the OXA1/ALB3/YidC family. Type 1 subfamily. In terms of assembly, interacts with the Sec translocase complex via SecD. Specifically interacts with transmembrane segments of nascent integral membrane proteins during membrane integration.

It is found in the cell inner membrane. Its function is as follows. Required for the insertion and/or proper folding and/or complex formation of integral membrane proteins into the membrane. Involved in integration of membrane proteins that insert both dependently and independently of the Sec translocase complex, as well as at least some lipoproteins. Aids folding of multispanning membrane proteins. The chain is Membrane protein insertase YidC from Paraburkholderia phytofirmans (strain DSM 17436 / LMG 22146 / PsJN) (Burkholderia phytofirmans).